The following is a 479-amino-acid chain: D-hydantoinase/dihydropyrimidinase (479 aa).

The Zn(2+) site is built by histidine 59, histidine 61, and lysine 150. At lysine 150 the chain carries N6-carboxylysine. Tyrosine 155 contacts substrate. Residues histidine 183 and histidine 239 each contribute to the Zn(2+) site. Residue serine 289 coordinates substrate. Position 316 (aspartate 316) interacts with Zn(2+). Asparagine 337 lines the substrate pocket.

Belongs to the metallo-dependent hydrolases superfamily. Hydantoinase/dihydropyrimidinase family. As to quaternary structure, homotetramer. Zn(2+) serves as cofactor. In terms of processing, carboxylation allows a single lysine to coordinate two zinc ions.

It catalyses the reaction 5,6-dihydrouracil + H2O = 3-(carbamoylamino)propanoate + H(+). Catalyzes the hydrolysis of dihydropyrimidines and of the structurally related DL-5-mono-substituted hydantoins, to produce N-carbamoyl-D-amino acids. In Pseudomonas aeruginosa (strain ATCC 15692 / DSM 22644 / CIP 104116 / JCM 14847 / LMG 12228 / 1C / PRS 101 / PAO1), this protein is D-hydantoinase/dihydropyrimidinase (dht).